A 567-amino-acid chain; its full sequence is Probable diguanylate cyclase DgcQ (567 aa).

The next 2 helical transmembrane spans lie at 20-40 (FGPG…STLL) and 357-377 (IALT…WGVI). Residues 425–560 (QPFSVIQLDL…GRNRICASDA (136 aa)) enclose the GGDEF domain. Asp433 is a Mg(2+) binding site. Residues Asn441, His446, and Asp450 each contribute to the substrate site. Residue Glu476 participates in Mg(2+) binding. Glu476 (proton acceptor) is an active-site residue.

As to quaternary structure, homodimer. Mg(2+) serves as cofactor.

The protein localises to the cell inner membrane. It carries out the reaction 2 GTP = 3',3'-c-di-GMP + 2 diphosphate. It functions in the pathway glycan metabolism; bacterial cellulose biosynthesis. Its pathway is purine metabolism; 3',5'-cyclic di-GMP biosynthesis. Catalyzes the synthesis of cyclic-di-GMP (c-di-GMP) via the condensation of 2 GTP molecules. Cyclic-di-GMP is a second messenger which controls cell surface-associated traits in bacteria. Involved in the regulation of cellulose production. This chain is Probable diguanylate cyclase DgcQ, found in Salmonella typhi.